The following is a 336-amino-acid chain: Alcohol dehydrogenase (336 aa).

7 residues coordinate Zn(2+): cysteine 37, histidine 58, cysteine 89, cysteine 92, cysteine 95, cysteine 103, and cysteine 145.

It belongs to the zinc-containing alcohol dehydrogenase family. It depends on Zn(2+) as a cofactor.

The catalysed reaction is a primary alcohol + NAD(+) = an aldehyde + NADH + H(+). It catalyses the reaction a secondary alcohol + NAD(+) = a ketone + NADH + H(+). The polypeptide is Alcohol dehydrogenase (adh) (Staphylococcus aureus (strain Mu50 / ATCC 700699)).